Reading from the N-terminus, the 436-residue chain is UDP-N-acetylmuramate--L-alanine ligase (436 aa).

Position 108 to 114 (108 to 114 (GAHGKTS)) interacts with ATP.

The protein belongs to the MurCDEF family.

It is found in the cytoplasm. It catalyses the reaction UDP-N-acetyl-alpha-D-muramate + L-alanine + ATP = UDP-N-acetyl-alpha-D-muramoyl-L-alanine + ADP + phosphate + H(+). It participates in cell wall biogenesis; peptidoglycan biosynthesis. Cell wall formation. The chain is UDP-N-acetylmuramate--L-alanine ligase from Bacillus cytotoxicus (strain DSM 22905 / CIP 110041 / 391-98 / NVH 391-98).